The primary structure comprises 392 residues: Phosphoglycerate kinase (392 aa).

Substrate-binding positions include 19-21 (DYN), arginine 34, 57-60 (HLGR), arginine 116, and arginine 149. Residues lysine 199, glutamate 321, and 347–350 (GGDS) contribute to the ATP site.

The protein belongs to the phosphoglycerate kinase family. As to quaternary structure, monomer.

It localises to the cytoplasm. The enzyme catalyses (2R)-3-phosphoglycerate + ATP = (2R)-3-phospho-glyceroyl phosphate + ADP. The protein operates within carbohydrate degradation; glycolysis; pyruvate from D-glyceraldehyde 3-phosphate: step 2/5. In Thermomicrobium roseum (strain ATCC 27502 / DSM 5159 / P-2), this protein is Phosphoglycerate kinase.